The primary structure comprises 816 residues: MGDMVVEPATLKPTSEPTPSPSGNNGGSLLSVITEGVGELSVIDPEVAQKACQEVLEKVKLLHGGVAISSKGTPLELVNGDGVDNEIRCLDDPPAQIREEEDEMGAGVASGTAKGARRRRQNNSAKQSWLLRLFESKLFDISMAISYLYNSKEPGVQAYIGNRLFYFRNEDVDFYLPQLLNMYIHMDEDVGDAIKPYIVHRCRQSINFSLQCALLLGAYSSDMHISTQRHSRGTKLRKLILSDELKPAHRKRELPTLSPAPDTGLSPSKRTHQRSKSDATASISLSSNLKRTASNPKVENEDEELSSSTESIDNSFSSPVRLAPEREFIKSLMAIGKRLATLPTKEQKTQRLISELSLLNHKLPARVWLPTAGFDHHVVRVPHTQAVVLNSKDKAPYLIYVEVLECENFDTTSVPARIPENRIRSTRSVENLPECGITHEQRAGSFSTVPNYDNDDEAWSVDDIGELQVELPEVHTNSCDNISQFSVDSITSQESKEPVFIAAGDIRRRLSEQLAHTPTAFKRDPEDPSAVALKEPWQEKVRRIREGSPYGHLPNWRLLSVIVKCGDDLRQELLAFQVLKQLQSIWEQERVPLWIKPYKILVISADSGMIEPVVNAVSIHQVKKQSQLSLLDYFLQEHGSYTTEAFLSAQRNFVQSCAGYCLVCYLLQVKDRHNGNILLDAEGHIIHIDFGFILSSSPRNLGFETSAFKLTTEFVDVMGGLNGDMFNYYKMLMLQGLIAARKHMDKVVQIVEIMQQGSQLPCFHGSSTIRNLKERFHMSMTEEQLQLLVEQMVDGSMRSITTKLYDGFQYLTNGIM.

3 disordered regions span residues 1–30, 101–120, and 250–318; these read MGDM…GSLL, EDEM…RRRR, and RKRE…SFSS. The residue at position 2 (Gly-2) is an N-acetylglycine. The interval 2–68 is interaction with ACBD3; it reads GDMVVEPATL…VKLLHGGVAI (67 aa). Residues 10-30 are compositionally biased toward low complexity; that stretch reads TLKPTSEPTPSPSGNNGGSLL. One can recognise a PIK helical domain in the interval 52 to 242; it reads CQEVLEKVKL…GTKLRKLILS (191 aa). Position 258 is a phosphoserine (Ser-258). The residue at position 263 (Thr-263) is a Phosphothreonine. 5 positions are modified to phosphoserine: Ser-266, Ser-275, Ser-277, Ser-284, and Ser-294. 2 stretches are compositionally biased toward polar residues: residues 278–297 and 306–318; these read DATA…SNPK and SSST…SFSS. Ser-428 carries the post-translational modification Phosphoserine. The residue at position 438 (Thr-438) is a Phosphothreonine. At Ser-511 the chain carries Phosphoserine. A phosphothreonine mark is found at Thr-517 and Thr-519. The PI3K/PI4K catalytic domain maps to 535–801; the sequence is EPWQEKVRRI…MVDGSMRSIT (267 aa). Residues 541–547 form a G-loop region; that stretch reads VRRIREG. Residues 668–676 are catalytic loop; sequence QVKDRHNGN. Positions 687-711 are activation loop; sequence HIDFGFILSSSPRNLGFETSAFKLT.

This sequence belongs to the PI3/PI4-kinase family. Type III PI4K subfamily. In terms of assembly, interacts with ARF1 and ARF3 in the Golgi complex, but not with ARF4, ARF5 or ARF6. Interacts with NCS1/FREQ in a calcium-independent manner. Interacts with CALN1/CABP8 and CALN2/CABP7; in a calcium-dependent manner; this interaction competes with NCS1/FREQ binding. Interacts with ACBD3. Interacts with ARMH3, YWHAB, YWHAE, YWHAG, YWHAH, YWHAQ, YWHAZ and SFN. Interacts with GGA2 (via VHS domain); the interaction is important for PI4KB location at the Golgi apparatus membrane. Interacts with ATG9A. The cofactor is Mg(2+). Requires Mn(2+) as cofactor.

Its subcellular location is the endomembrane system. The protein localises to the mitochondrion outer membrane. The protein resides in the rough endoplasmic reticulum membrane. It localises to the golgi apparatus. It is found in the golgi apparatus membrane. The catalysed reaction is a 1,2-diacyl-sn-glycero-3-phospho-(1D-myo-inositol) + ATP = a 1,2-diacyl-sn-glycero-3-phospho-(1D-myo-inositol 4-phosphate) + ADP + H(+). With respect to regulation, inhibited by wortmannin. Increased kinase activity upon interaction with NCS1/FREQ. In terms of biological role, phosphorylates phosphatidylinositol (PI) in the first committed step in the production of the second messenger inositol-1,4,5,-trisphosphate (PIP). May regulate Golgi disintegration/reorganization during mitosis, possibly via its phosphorylation. Involved in Golgi-to-plasma membrane trafficking. May play an important role in the inner ear development. The chain is Phosphatidylinositol 4-kinase beta (Pi4kb) from Mus musculus (Mouse).